The chain runs to 241 residues: Putative lipoprotein YvcA (241 aa).

The N-terminal stretch at 1-18 (MKKIIFICFSLLLALTGG) is a signal peptide. A lipid anchor (N-palmitoyl cysteine) is attached at Cys19. Cys19 carries the S-diacylglycerol cysteine lipid modification. Residues 22 to 48 (NDNDKNSTNDNKTEAVKPKDMDPKDLP) form a disordered region. Basic and acidic residues predominate over residues 23–46 (DNDKNSTNDNKTEAVKPKDMDPKD).

It is found in the cell membrane. Functionally, required for complex colony architecture. The chain is Putative lipoprotein YvcA (yvcA) from Bacillus subtilis (strain 168).